The following is a 481-amino-acid chain: RuvB-like helicase 2 (481 aa).

73–80 (GEPSTGKT) lines the ATP pocket. The disordered stretch occupies residues 453–481 (EEVERDPAAGGGAKRRVEGGGGDAQPMEH).

It belongs to the RuvB family. In terms of assembly, forms homohexameric rings. May form a dodecamer with rept made of two stacked hexameric rings. Component of the chromatin remodeling Ino80 complex. Interacts with Myc and pont. As to expression, higher expression occurs in primordia of mesoderm, anterior and posterior midgut and cephalic furrow early in gastrulation, as well as in endoderm and mesoderm lineages during germ band extension. Later in development expression is only maintained in endoderm cells. Expressed in thoracic and abdominal segment neural precursors of all embryonic chordotonal organs.

The protein resides in the nucleus. It carries out the reaction ATP + H2O = ADP + phosphate + H(+). Functionally, acts as a transcriptional coactivator in Wg signaling caused by altered arm signaling. Pont and rept interfere antagonistically with nuclear arm signaling function, and are required to enhance or reduce arm activity, respectively. Also an essential cofactor for the normal function of Myc; required for cellular proliferation and growth. Proposed core component of the chromatin remodeling Ino80 complex which is involved in transcriptional regulation, DNA replication and probably DNA repair. The chain is RuvB-like helicase 2 from Drosophila melanogaster (Fruit fly).